We begin with the raw amino-acid sequence, 952 residues long: Alpha-L-rhamnosidase (952 aa).

Positions 1-21 are cleaved as a signal peptide; it reads MKYNKLLFSLLLLAVFCFSCK. Alpha-L-rhamnose is bound by residues D520, 524–525, D532, and W594; that span reads RE. Residue E525 is the Proton donor of the active site. E809 (proton acceptor) is an active-site residue. H826 is an alpha-L-rhamnose binding site.

This sequence belongs to the glycosyl hydrolase 78 family.

It localises to the cell membrane. It carries out the reaction Hydrolysis of terminal non-reducing alpha-L-rhamnose residues in alpha-L-rhamnosides.. Its function is as follows. Alpha-L-rhamnosidase that may be involved in ulvan degradation. Ulvan is the main polysaccharide component of the Ulvales (green seaweed) cell wall. It is composed of disaccharide building blocks comprising 3-sulfated rhamnose (Rha3S) linked to D-glucuronic acid (GlcA), L-iduronic acid (IduA), or D-xylose (Xyl). In Formosa agariphila (strain DSM 15362 / KCTC 12365 / LMG 23005 / KMM 3901 / M-2Alg 35-1), this protein is Alpha-L-rhamnosidase.